Reading from the N-terminus, the 151-residue chain is D-aminoacyl-tRNA deacylase (151 aa).

Residues 142–143 (GP) carry the Gly-cisPro motif, important for rejection of L-amino acids motif.

It belongs to the DTD family. In terms of assembly, homodimer.

The protein localises to the cytoplasm. It carries out the reaction glycyl-tRNA(Ala) + H2O = tRNA(Ala) + glycine + H(+). It catalyses the reaction a D-aminoacyl-tRNA + H2O = a tRNA + a D-alpha-amino acid + H(+). In terms of biological role, an aminoacyl-tRNA editing enzyme that deacylates mischarged D-aminoacyl-tRNAs. Also deacylates mischarged glycyl-tRNA(Ala), protecting cells against glycine mischarging by AlaRS. Acts via tRNA-based rather than protein-based catalysis; rejects L-amino acids rather than detecting D-amino acids in the active site. By recycling D-aminoacyl-tRNA to D-amino acids and free tRNA molecules, this enzyme counteracts the toxicity associated with the formation of D-aminoacyl-tRNA entities in vivo and helps enforce protein L-homochirality. The polypeptide is D-aminoacyl-tRNA deacylase (Psychrobacter cryohalolentis (strain ATCC BAA-1226 / DSM 17306 / VKM B-2378 / K5)).